The chain runs to 338 residues: Ornithine carbamoyltransferase (338 aa).

Carbamoyl phosphate is bound by residues 56–59 (STRT), Arg-107, and 134–137 (HPTQ). L-ornithine is bound by residues Asn-168, Asp-232, and 236–237 (SM). Carbamoyl phosphate contacts are provided by residues 274-275 (CL) and Arg-320.

This sequence belongs to the aspartate/ornithine carbamoyltransferase superfamily. OTCase family.

It is found in the cytoplasm. It catalyses the reaction carbamoyl phosphate + L-ornithine = L-citrulline + phosphate + H(+). The protein operates within amino-acid biosynthesis; L-arginine biosynthesis; L-arginine from L-ornithine and carbamoyl phosphate: step 1/3. In terms of biological role, reversibly catalyzes the transfer of the carbamoyl group from carbamoyl phosphate (CP) to the N(epsilon) atom of ornithine (ORN) to produce L-citrulline. This chain is Ornithine carbamoyltransferase (argI), found in Buchnera aphidicola subsp. Schizaphis graminum (strain Sg).